A 57-amino-acid chain; its full sequence is Toxin GhoT (57 aa).

2 helical membrane-spanning segments follow: residues 7–27 (ILIF…FISH) and 37–57 (AFLV…FSLF).

This sequence belongs to the GhoT/OrtT toxin family.

Its subcellular location is the cell inner membrane. Functionally, toxic component of a type V toxin-antitoxin (TA) system. Causes membrane damage when induced by MqsR, slowing cell growth and leading to the formation of dormant persister cells; involved with GhoS, its antitoxin, in reducing cell growth during antibacterial stress. Its toxic effects are neutralized by GhoS, which digests ghoT transcripts in a sequence-specific manner. The sequence is that of Toxin GhoT from Escherichia coli O157:H7.